The following is an 85-amino-acid chain: Phosphocarrier protein HPr (85 aa).

An HPr domain is found at 1–85 (MFQQEVTITA…HLVKLMAELE (85 aa)). Catalysis depends on His15, which acts as the Pros-phosphohistidine intermediate.

The protein resides in the cytoplasm. In terms of biological role, general (non sugar-specific) component of the phosphoenolpyruvate-dependent sugar phosphotransferase system (sugar PTS). This major carbohydrate active-transport system catalyzes the phosphorylation of incoming sugar substrates concomitantly with their translocation across the cell membrane. The phosphoryl group from phosphoenolpyruvate (PEP) is transferred to the phosphoryl carrier protein HPr by enzyme I. Phospho-HPr then transfers it to the PTS EIIA domain. This chain is Phosphocarrier protein HPr (ptsH), found in Klebsiella pneumoniae.